The following is a 398-amino-acid chain: Succinyl-diaminopimelate desuccinylase (398 aa).

Position 73 (histidine 73) interacts with Zn(2+). Residue aspartate 75 is part of the active site. Aspartate 106 is a Zn(2+) binding site. The Proton acceptor role is filled by glutamate 140. Residues glutamate 141, glutamate 169, and histidine 366 each contribute to the Zn(2+) site.

This sequence belongs to the peptidase M20A family. DapE subfamily. Homodimer. Zn(2+) is required as a cofactor. Requires Co(2+) as cofactor.

It catalyses the reaction N-succinyl-(2S,6S)-2,6-diaminopimelate + H2O = (2S,6S)-2,6-diaminopimelate + succinate. Its pathway is amino-acid biosynthesis; L-lysine biosynthesis via DAP pathway; LL-2,6-diaminopimelate from (S)-tetrahydrodipicolinate (succinylase route): step 3/3. Its function is as follows. Catalyzes the hydrolysis of N-succinyl-L,L-diaminopimelic acid (SDAP), forming succinate and LL-2,6-diaminopimelate (DAP), an intermediate involved in the bacterial biosynthesis of lysine and meso-diaminopimelic acid, an essential component of bacterial cell walls. In Agrobacterium fabrum (strain C58 / ATCC 33970) (Agrobacterium tumefaciens (strain C58)), this protein is Succinyl-diaminopimelate desuccinylase.